The chain runs to 105 residues: Met repressor (105 aa).

It belongs to the MetJ family. As to quaternary structure, homodimer.

The protein resides in the cytoplasm. Its function is as follows. This regulatory protein, when combined with SAM (S-adenosylmethionine) represses the expression of the methionine regulon and of enzymes involved in SAM synthesis. In Citrobacter koseri (strain ATCC BAA-895 / CDC 4225-83 / SGSC4696), this protein is Met repressor.